Reading from the N-terminus, the 132-residue chain is Small ribosomal subunit protein uS8 (132 aa).

Belongs to the universal ribosomal protein uS8 family. As to quaternary structure, part of the 30S ribosomal subunit. Contacts proteins S5 and S12.

In terms of biological role, one of the primary rRNA binding proteins, it binds directly to 16S rRNA central domain where it helps coordinate assembly of the platform of the 30S subunit. The chain is Small ribosomal subunit protein uS8 from Geobacter sulfurreducens (strain ATCC 51573 / DSM 12127 / PCA).